Here is a 382-residue protein sequence, read N- to C-terminus: 4-hydroxybutyrate dehydrogenase (382 aa).

Residues aspartate 37, asparagine 67, 94–98 (GSSID), 138–142 (TTSGT), and lysine 159 contribute to the NAD(+) site. Fe cation is bound by residues aspartate 193, histidine 197, histidine 261, and histidine 280. Histidine 280 contributes to the NAD(+) binding site.

This sequence belongs to the iron-containing alcohol dehydrogenase family. Fe cation serves as cofactor.

It carries out the reaction 4-hydroxybutanoate + NAD(+) = succinate semialdehyde + NADH + H(+). With respect to regulation, shows competitive inhibition of GHBDH activity by the product succinic semialdehyde, and non-competitive inhibitions by the three other substrate-product combinations. The conversion of GHB to SSA is activated by two different saturating purified nudix hydrolases, B.methanolicus activator ACT and E.coli NudF. The nudix hydrolases do not activate the reverse reaction. Involved in the degradation of 4-hydroxybutyrate. Catalyzes the interconversion of gamma-hydroxybutyrate (GHB) and succinic semialdehyde (SSA). The protein is 4-hydroxybutyrate dehydrogenase of Cupriavidus necator (Alcaligenes eutrophus).